Here is a 161-residue protein sequence, read N- to C-terminus: Crossover junction endodeoxyribonuclease RuvC (161 aa).

Catalysis depends on residues D9, E72, and D144. The Mg(2+) site is built by D9, E72, and D144.

It belongs to the RuvC family. In terms of assembly, homodimer which binds Holliday junction (HJ) DNA. The HJ becomes 2-fold symmetrical on binding to RuvC with unstacked arms; it has a different conformation from HJ DNA in complex with RuvA. In the full resolvosome a probable DNA-RuvA(4)-RuvB(12)-RuvC(2) complex forms which resolves the HJ. Requires Mg(2+) as cofactor.

It localises to the cytoplasm. It carries out the reaction Endonucleolytic cleavage at a junction such as a reciprocal single-stranded crossover between two homologous DNA duplexes (Holliday junction).. Functionally, the RuvA-RuvB-RuvC complex processes Holliday junction (HJ) DNA during genetic recombination and DNA repair. Endonuclease that resolves HJ intermediates. Cleaves cruciform DNA by making single-stranded nicks across the HJ at symmetrical positions within the homologous arms, yielding a 5'-phosphate and a 3'-hydroxyl group; requires a central core of homology in the junction. The consensus cleavage sequence is 5'-(A/T)TT(C/G)-3'. Cleavage occurs on the 3'-side of the TT dinucleotide at the point of strand exchange. HJ branch migration catalyzed by RuvA-RuvB allows RuvC to scan DNA until it finds its consensus sequence, where it cleaves and resolves the cruciform DNA. The polypeptide is Crossover junction endodeoxyribonuclease RuvC (Synechococcus sp. (strain ATCC 27144 / PCC 6301 / SAUG 1402/1) (Anacystis nidulans)).